The primary structure comprises 141 residues: Large ribosomal subunit protein uL16 (141 aa).

The protein belongs to the universal ribosomal protein uL16 family. As to quaternary structure, part of the 50S ribosomal subunit.

Functionally, binds 23S rRNA and is also seen to make contacts with the A and possibly P site tRNAs. The polypeptide is Large ribosomal subunit protein uL16 (Nostoc punctiforme (strain ATCC 29133 / PCC 73102)).